Reading from the N-terminus, the 275-residue chain is Ribosomal RNA small subunit methyltransferase A (275 aa).

Asn-28, Leu-30, Gly-55, Glu-77, Asp-103, and Asn-123 together coordinate S-adenosyl-L-methionine.

This sequence belongs to the class I-like SAM-binding methyltransferase superfamily. rRNA adenine N(6)-methyltransferase family. RsmA subfamily.

It is found in the cytoplasm. It carries out the reaction adenosine(1518)/adenosine(1519) in 16S rRNA + 4 S-adenosyl-L-methionine = N(6)-dimethyladenosine(1518)/N(6)-dimethyladenosine(1519) in 16S rRNA + 4 S-adenosyl-L-homocysteine + 4 H(+). Specifically dimethylates two adjacent adenosines (A1518 and A1519) in the loop of a conserved hairpin near the 3'-end of 16S rRNA in the 30S particle. May play a critical role in biogenesis of 30S subunits. The protein is Ribosomal RNA small subunit methyltransferase A of Rhizobium etli (strain CIAT 652).